A 217-amino-acid polypeptide reads, in one-letter code: Proteasome subunit beta (217 aa).

The propeptide at 1–14 is removed in mature form; by autocatalysis; that stretch reads MIANNDQYKEYMKG. Residue Thr15 is the Nucleophile of the active site.

The protein belongs to the peptidase T1B family. The 20S proteasome core is composed of 14 alpha and 14 beta subunits that assemble into four stacked heptameric rings, resulting in a barrel-shaped structure. The two inner rings, each composed of seven catalytic beta subunits, are sandwiched by two outer rings, each composed of seven alpha subunits. The catalytic chamber with the active sites is on the inside of the barrel. Has a gated structure, the ends of the cylinder being occluded by the N-termini of the alpha-subunits. Is capped at one or both ends by the proteasome regulatory ATPase, PAN.

The protein localises to the cytoplasm. It catalyses the reaction Cleavage of peptide bonds with very broad specificity.. With respect to regulation, the formation of the proteasomal ATPase PAN-20S proteasome complex, via the docking of the C-termini of PAN into the intersubunit pockets in the alpha-rings, triggers opening of the gate for substrate entry. Interconversion between the open-gate and close-gate conformations leads to a dynamic regulation of the 20S proteasome proteolysis activity. Component of the proteasome core, a large protease complex with broad specificity involved in protein degradation. The chain is Proteasome subunit beta from Methanococcus aeolicus (strain ATCC BAA-1280 / DSM 17508 / OCM 812 / Nankai-3).